Here is an 853-residue protein sequence, read N- to C-terminus: Leucine-rich repeat and death domain-containing protein 1 (853 aa).

Residues Met-1 to Ser-78 form a disordered region. Over residues Leu-19–Asp-31 the composition is skewed to acidic residues. The span at Gln-56–Leu-65 shows a compositional bias: polar residues. LRR repeat units follow at residues Met-133–Val-157, Tyr-159–Asp-180, Gly-183–Phe-204, Asn-206–Leu-227, Asn-229–Arg-251, Tyr-252–Lys-274, Asn-275–Pro-297, Lys-298–Leu-319, Asn-321–Leu-342, Lys-344–Phe-365, Glu-367–Cys-388, Asn-390–Leu-411, Asn-413–Ser-435, Asn-436–Cys-457, Lys-459–Gln-481, Ser-482–Ser-503, Gln-505–Thr-527, Asn-528–Met-549, Ser-551–Lys-573, Asn-574–Lys-596, Arg-597–Leu-618, Thr-620–Val-641, Gln-646–Arg-668, Ser-669–Leu-690, Val-692–Leu-713, and Ser-715–Gly-736. The Death domain maps to Leu-757–Asn-845.

This chain is Leucine-rich repeat and death domain-containing protein 1 (Lrrd1), found in Mus musculus (Mouse).